The sequence spans 386 residues: Caspase-1-A (386 aa).

Positions 1 to 100 are excised as a propeptide; sequence MTAQLNKVRR…PPMAPVPIQE (100 aa). The 67-residue stretch at 22–88 folds into the CARD domain; the sequence is SDLLDDLREK…HKTLAKSLGL (67 aa). Active-site residues include His218 and Cys274. Residues 287 to 296 constitute a propeptide that is removed on maturation; the sequence is DVASPPLEDD.

Belongs to the peptidase C14A family. In terms of assembly, heterotetramer that consists of two anti-parallel arranged heterodimers, each one formed by a 20 kDa (Caspase-1 subunit p20) and a 10 kDa (Caspase-1 subunit p10) subunit. Heterotetramer that consists of two anti-parallel arranged heterodimers, each one formed by a 20 kDa (Caspase-1 subunit p20) and a 10 kDa (Caspase-1 subunit p10) subunit. Can form a heterodimer with isoform epsilon which then has an inhibitory effect. In terms of processing, the two subunits are derived from the precursor sequence by an autocatalytic mechanism.

The protein localises to the cytoplasm. The protein resides in the cell membrane. It carries out the reaction Strict requirement for an Asp residue at position P1 and has a preferred cleavage sequence of Tyr-Val-Ala-Asp-|-.. Thiol protease involved in a variety of inflammatory processes by proteolytically cleaving other proteins, such as the precursors of the inflammatory cytokines interleukin-1 beta (IL1B) and interleukin 18 (IL18) as well as the pyroptosis inducer Gasdermin-D (GSDMD), into active mature peptides. Plays a key role in cell immunity as an inflammatory response initiator: once activated through formation of an inflammasome complex, it initiates a pro-inflammatory response through the cleavage of the two inflammatory cytokines IL1B and IL18, releasing the mature cytokines which are involved in a variety of inflammatory processes. Cleaves a tetrapeptide after an Asp residue at position P1. Also initiates pyroptosis, a programmed lytic cell death pathway, through cleavage of GSDMD. In Xenopus laevis (African clawed frog), this protein is Caspase-1-A (casp1-a).